Consider the following 87-residue polypeptide: Cell division topological specificity factor (87 aa).

Belongs to the MinE family.

Functionally, prevents the cell division inhibition by proteins MinC and MinD at internal division sites while permitting inhibition at polar sites. This ensures cell division at the proper site by restricting the formation of a division septum at the midpoint of the long axis of the cell. This Neisseria meningitidis serogroup C (strain 053442) protein is Cell division topological specificity factor.